A 440-amino-acid chain; its full sequence is 2-phosphinomethylmalate synthase (440 aa).

The 275-residue stretch at 39–313 (VWLSETTHRD…GARVNLPAVN (275 aa)) folds into the Pyruvate carboxyltransferase domain.

This sequence belongs to the alpha-IPM synthase/homocitrate synthase family. In terms of assembly, homodimer. It depends on Mn(2+) as a cofactor. Co(2+) is required as a cofactor.

The enzyme catalyses 3-(hydrohydroxyphosphoryl)pyruvate + acetyl-CoA + H2O = phosphinomethylmalate + CoA + H(+). Its pathway is secondary metabolite biosynthesis; bialaphos biosynthesis. With respect to regulation, strongly inhibited by p-chloromercuribenzoate (pCMB), iodoacetamide (IA) and EDTA. Functionally, involved in the biosynthesis of phosphinothricin tripeptide (PTT), also known as bialaphos (BA), a natural-product antibiotic and potent herbicide. Catalyzes the condensation berween phosphinopyruvic acid (PPA), an analog of oxalacetic acid, and acetyl-CoA to form R-2-phosphinomethylmalic acid (PMM). Can also act on oxaloacetate, but shows no activity when acetyl-CoA is substituted by propionyl-CoA or butyryl-CoA. This Streptomyces hygroscopicus protein is 2-phosphinomethylmalate synthase.